A 72-amino-acid polypeptide reads, in one-letter code: UPF0346 protein GTNG_1419 (72 aa).

This sequence belongs to the UPF0346 family.

The sequence is that of UPF0346 protein GTNG_1419 from Geobacillus thermodenitrificans (strain NG80-2).